The sequence spans 309 residues: 4-hydroxy-3-methylbut-2-enyl diphosphate reductase (309 aa).

Cys-12 is a binding site for [4Fe-4S] cluster. (2E)-4-hydroxy-3-methylbut-2-enyl diphosphate is bound by residues His-41 and His-74. Dimethylallyl diphosphate is bound by residues His-41 and His-74. Residues His-41 and His-74 each contribute to the isopentenyl diphosphate site. [4Fe-4S] cluster is bound at residue Cys-96. Residue His-124 participates in (2E)-4-hydroxy-3-methylbut-2-enyl diphosphate binding. Residue His-124 coordinates dimethylallyl diphosphate. His-124 provides a ligand contact to isopentenyl diphosphate. Glu-126 acts as the Proton donor in catalysis. (2E)-4-hydroxy-3-methylbut-2-enyl diphosphate is bound at residue Thr-167. Cys-197 is a [4Fe-4S] cluster binding site. Ser-225, Ser-226, Asn-227, and Ser-269 together coordinate (2E)-4-hydroxy-3-methylbut-2-enyl diphosphate. Residues Ser-225, Ser-226, Asn-227, and Ser-269 each contribute to the dimethylallyl diphosphate site. Isopentenyl diphosphate is bound by residues Ser-225, Ser-226, Asn-227, and Ser-269.

It belongs to the IspH family. Requires [4Fe-4S] cluster as cofactor.

It catalyses the reaction isopentenyl diphosphate + 2 oxidized [2Fe-2S]-[ferredoxin] + H2O = (2E)-4-hydroxy-3-methylbut-2-enyl diphosphate + 2 reduced [2Fe-2S]-[ferredoxin] + 2 H(+). The enzyme catalyses dimethylallyl diphosphate + 2 oxidized [2Fe-2S]-[ferredoxin] + H2O = (2E)-4-hydroxy-3-methylbut-2-enyl diphosphate + 2 reduced [2Fe-2S]-[ferredoxin] + 2 H(+). Its pathway is isoprenoid biosynthesis; dimethylallyl diphosphate biosynthesis; dimethylallyl diphosphate from (2E)-4-hydroxy-3-methylbutenyl diphosphate: step 1/1. It functions in the pathway isoprenoid biosynthesis; isopentenyl diphosphate biosynthesis via DXP pathway; isopentenyl diphosphate from 1-deoxy-D-xylulose 5-phosphate: step 6/6. In terms of biological role, catalyzes the conversion of 1-hydroxy-2-methyl-2-(E)-butenyl 4-diphosphate (HMBPP) into a mixture of isopentenyl diphosphate (IPP) and dimethylallyl diphosphate (DMAPP). Acts in the terminal step of the DOXP/MEP pathway for isoprenoid precursor biosynthesis. This chain is 4-hydroxy-3-methylbut-2-enyl diphosphate reductase, found in Shewanella halifaxensis (strain HAW-EB4).